The following is a 405-amino-acid chain: Coenzyme F420 hydrogenase subunit alpha (405 aa).

Ni(2+) is bound by residues cysteine 63, cysteine 66, cysteine 380, and cysteine 383.

Belongs to the [NiFe]/[NiFeSe] hydrogenase large subunit family. Heterocomplex of the form (alpha(1)beta(1)gamma(1))(8). Requires Ni(2+) as cofactor. It depends on iron-sulfur cluster as a cofactor. The cofactor is FAD.

It catalyses the reaction oxidized coenzyme F420-(gamma-L-Glu)(n) + H2 + H(+) = reduced coenzyme F420-(gamma-L-Glu)(n). Its function is as follows. Reduces the physiological low-potential two-electron acceptor coenzyme F420, and the artificial one-electron acceptor methylviologen. This chain is Coenzyme F420 hydrogenase subunit alpha (frhA), found in Methanothermobacter thermautotrophicus (strain ATCC 29096 / DSM 1053 / JCM 10044 / NBRC 100330 / Delta H) (Methanobacterium thermoautotrophicum).